A 38-amino-acid polypeptide reads, in one-letter code: Large ribosomal subunit protein bL36 (38 aa).

It belongs to the bacterial ribosomal protein bL36 family.

This chain is Large ribosomal subunit protein bL36, found in Myxococcus xanthus (strain DK1622).